The sequence spans 364 residues: Aminomethyltransferase (364 aa).

Belongs to the GcvT family. As to quaternary structure, the glycine cleavage system is composed of four proteins: P, T, L and H.

The enzyme catalyses N(6)-[(R)-S(8)-aminomethyldihydrolipoyl]-L-lysyl-[protein] + (6S)-5,6,7,8-tetrahydrofolate = N(6)-[(R)-dihydrolipoyl]-L-lysyl-[protein] + (6R)-5,10-methylene-5,6,7,8-tetrahydrofolate + NH4(+). In terms of biological role, the glycine cleavage system catalyzes the degradation of glycine. This Salmonella paratyphi B (strain ATCC BAA-1250 / SPB7) protein is Aminomethyltransferase.